A 61-amino-acid chain; its full sequence is uncharacterized protein (61 aa).

Positions 38 to 61 are disordered; the sequence is TPRPFTPGLADPRRLGPRRVQAAQ.

This is an uncharacterized protein from Homo sapiens (Human).